The chain runs to 462 residues: Dipeptidyl peptidase 1 (462 aa).

The N-terminal stretch at 1–24 (MGPWTHSLRAVLLLVLLGVCTVRS) is a signal peptide. Asn-29 and Asn-53 each carry an N-linked (GlcNAc...) asparagine glycan. 5 disulfide bridges follow: Cys-30–Cys-118, Cys-54–Cys-136, Cys-254–Cys-297, Cys-290–Cys-330, and Cys-320–Cys-336. The propeptide occupies 135–230 (ACFVGKKVES…DEIQQQILNL (96 aa)). The active site involves Cys-257. N-linked (GlcNAc...) asparagine glycosylation is present at Asn-275. Chloride contacts are provided by Phe-301 and Tyr-303. Tyr-346 contributes to the chloride binding site. Residues His-404 and Asn-426 contribute to the active site.

Belongs to the peptidase C1 family. In terms of assembly, tetramer of heterotrimers consisting of exclusion domain, heavy- and light chains. Requires chloride as cofactor. As to expression, broadly distributed, but higher levels found in lung, liver, kidney and spleen. Lower levels found in testis and brain.

The protein resides in the lysosome. It catalyses the reaction Release of an N-terminal dipeptide, Xaa-Yaa-|-Zaa-, except when Xaa is Arg or Lys, or Yaa or Zaa is Pro.. Functionally, thiol protease. Has dipeptidylpeptidase activity. Active against a broad range of dipeptide substrates composed of both polar and hydrophobic amino acids. Proline cannot occupy the P1 position and arginine cannot occupy the P2 position of the substrate. Can act as both an exopeptidase and endopeptidase. Activates serine proteases such as elastase, cathepsin G and granzymes A and B. The chain is Dipeptidyl peptidase 1 (Ctsc) from Mus musculus (Mouse).